A 121-amino-acid chain; its full sequence is Phosphoribosyl-AMP cyclohydrolase (121 aa).

Asp74 lines the Mg(2+) pocket. Cys75 contacts Zn(2+). Residues Asp76 and Asp78 each coordinate Mg(2+). The Zn(2+) site is built by Cys91 and Cys98.

This sequence belongs to the PRA-CH family. Homodimer. Requires Mg(2+) as cofactor. It depends on Zn(2+) as a cofactor.

It is found in the cytoplasm. The enzyme catalyses 1-(5-phospho-beta-D-ribosyl)-5'-AMP + H2O = 1-(5-phospho-beta-D-ribosyl)-5-[(5-phospho-beta-D-ribosylamino)methylideneamino]imidazole-4-carboxamide. It functions in the pathway amino-acid biosynthesis; L-histidine biosynthesis; L-histidine from 5-phospho-alpha-D-ribose 1-diphosphate: step 3/9. Catalyzes the hydrolysis of the adenine ring of phosphoribosyl-AMP. The polypeptide is Phosphoribosyl-AMP cyclohydrolase (Methanothrix thermoacetophila (strain DSM 6194 / JCM 14653 / NBRC 101360 / PT) (Methanosaeta thermophila)).